The following is a 396-amino-acid chain: S-adenosylmethionine synthase 2 (396 aa).

Glu13 contributes to the Mg(2+) binding site. Residue His19 coordinates ATP. Position 47 (Glu47) interacts with K(+). L-methionine contacts are provided by Glu60 and Gln103. ATP contacts are provided by residues 171–173 (DGK), 239–242 (SGRF), Asp250, 256–257 (RK), Ala273, Lys277, and Lys281. Asp250 lines the L-methionine pocket. Position 281 (Lys281) interacts with L-methionine.

Belongs to the AdoMet synthase family. Homotetramer. The cofactor is Mn(2+). Mg(2+) serves as cofactor. It depends on Co(2+) as a cofactor. Requires K(+) as cofactor.

Its subcellular location is the cytoplasm. The enzyme catalyses L-methionine + ATP + H2O = S-adenosyl-L-methionine + phosphate + diphosphate. The protein operates within amino-acid biosynthesis; S-adenosyl-L-methionine biosynthesis; S-adenosyl-L-methionine from L-methionine: step 1/1. In terms of biological role, catalyzes the formation of S-adenosylmethionine from methionine and ATP. The reaction comprises two steps that are both catalyzed by the same enzyme: formation of S-adenosylmethionine (AdoMet) and triphosphate, and subsequent hydrolysis of the triphosphate. The polypeptide is S-adenosylmethionine synthase 2 (SAM2) (Dianthus caryophyllus (Carnation)).